Reading from the N-terminus, the 75-residue chain is Phi-liotoxin-Lw1a (75 aa).

An N-terminal signal peptide occupies residues methionine 1–glycine 25. The propeptide occupies aspartate 26–arginine 39. 2 disulfide bridges follow: cysteine 50–cysteine 62 and cysteine 56–cysteine 68.

In terms of tissue distribution, expressed by the venom gland.

It localises to the secreted. Functionally, affects the activity of both ryanodine-sensitive calcium-release channels RyR1 and RyR2 with high potency. At lower concentrations the toxin increases full openings of the RyRs, and at higher concentrations it inhibits full openings and induce openings to subconductance levels and reduces the number of full conductance openings. The different actions may be attributed to the toxins binding at different sites on the RyRs, with binding at a high-affinity site mediating the increase in full openings and the induction of subconductance states evoked upon binding to a lower-affinity site. Insect-selective toxin that provokes a dose-dependent contractile paralysis in crickets and blowfly larvae, followed by death. This chain is Phi-liotoxin-Lw1a, found in Hormurus waigiensis (Australian rainforest scorpion).